Reading from the N-terminus, the 336-residue chain is IgLON family member 5 (336 aa).

The first 30 residues, 1–30 (MPPPAPGARLRLLAAAALAGLAVISRGLLS), serve as a signal peptide directing secretion. Ig-like C2-type domains are found at residues 33-122 (LEFS…QPYT), 132-213 (PARI…VLVT), and 218-307 (PTIT…MRLL). Asparagine 41, asparagine 49, asparagine 67, and asparagine 137 each carry an N-linked (GlcNAc...) asparagine glycan. A disulfide bridge connects residues cysteine 54 and cysteine 112. Intrachain disulfides connect cysteine 154–cysteine 195 and cysteine 238–cysteine 291. A glycan (N-linked (GlcNAc...) asparagine) is linked at asparagine 288.

This sequence belongs to the immunoglobulin superfamily. IgLON family.

It localises to the secreted. The sequence is that of IgLON family member 5 (Iglon5) from Mus musculus (Mouse).